The chain runs to 446 residues: Exodeoxyribonuclease 7 large subunit (446 aa).

It belongs to the XseA family. Heterooligomer composed of large and small subunits.

The protein localises to the cytoplasm. It catalyses the reaction Exonucleolytic cleavage in either 5'- to 3'- or 3'- to 5'-direction to yield nucleoside 5'-phosphates.. Bidirectionally degrades single-stranded DNA into large acid-insoluble oligonucleotides, which are then degraded further into small acid-soluble oligonucleotides. In Acholeplasma laidlawii (strain PG-8A), this protein is Exodeoxyribonuclease 7 large subunit.